The chain runs to 156 residues: ATP synthase subunit b (156 aa).

A helical membrane pass occupies residues 7 to 29 (LIGQSLTFIAFILFCMKYVWPQL).

It belongs to the ATPase B chain family. F-type ATPases have 2 components, F(1) - the catalytic core - and F(0) - the membrane proton channel. F(1) has five subunits: alpha(3), beta(3), gamma(1), delta(1), epsilon(1). F(0) has three main subunits: a(1), b(2) and c(10-14). The alpha and beta chains form an alternating ring which encloses part of the gamma chain. F(1) is attached to F(0) by a central stalk formed by the gamma and epsilon chains, while a peripheral stalk is formed by the delta and b chains.

It is found in the cell inner membrane. Its function is as follows. F(1)F(0) ATP synthase produces ATP from ADP in the presence of a proton or sodium gradient. F-type ATPases consist of two structural domains, F(1) containing the extramembraneous catalytic core and F(0) containing the membrane proton channel, linked together by a central stalk and a peripheral stalk. During catalysis, ATP synthesis in the catalytic domain of F(1) is coupled via a rotary mechanism of the central stalk subunits to proton translocation. Component of the F(0) channel, it forms part of the peripheral stalk, linking F(1) to F(0). This is ATP synthase subunit b from Saccharophagus degradans (strain 2-40 / ATCC 43961 / DSM 17024).